The sequence spans 104 residues: Protein U9 (104 aa).

This Homo sapiens (Human) protein is Protein U9 (U9).